The chain runs to 204 residues: CASP-like protein 2U2 (204 aa).

The Cytoplasmic segment spans residues 1 to 36 (MGVLGGDAHVPIGSQVSPGSVVVTNNESFGHRKLLK). The helical transmembrane segment at 37 to 57 (GVDFLVRIKAFAFCLAVIVLL) threads the bilayer. Residues 58-84 (KNNVQTTVIAPGIVLQAKYNNTKAPVS) are Extracellular-facing. N-linked (GlcNAc...) asparagine glycosylation is present at Asn-77. The chain crosses the membrane as a helical span at residues 85 to 105 (LLVLASICCGYAFLQAVVSLL). The Cytoplasmic portion of the chain corresponds to 106–117 (SFIRDKRVLNNT). A helical membrane pass occupies residues 118–138 (VLAWLTFLLDQVLTYLLLGSA). Topologically, residues 139 to 170 (AATAEAAYIAKRGEDKVQWKAVCGPFKRFCDH) are extracellular. A helical membrane pass occupies residues 171 to 191 (FAATVFLSFIAVIAFAVSAAI). The Cytoplasmic portion of the chain corresponds to 192–204 (SAYYLFRKSKGFK).

It belongs to the Casparian strip membrane proteins (CASP) family. Homodimer and heterodimers.

It is found in the cell membrane. This is CASP-like protein 2U2 from Selaginella moellendorffii (Spikemoss).